We begin with the raw amino-acid sequence, 793 residues long: Probable exo-1,4-beta-xylosidase xlnD (793 aa).

The N-terminal stretch at 1-20 is a signal peptide; sequence MPRVASVAAVLAALLPSALG. N-linked (GlcNAc...) asparagine glycosylation is found at Asn-23, Asn-87, and Asn-142. Residue Asp-310 is part of the active site. Residues Asn-326, Asn-385, Asn-404, Asn-440, Asn-477, Asn-518, Asn-559, Asn-614, Asn-652, Asn-679, and Asn-701 are each glycosylated (N-linked (GlcNAc...) asparagine).

This sequence belongs to the glycosyl hydrolase 3 family.

It localises to the secreted. The enzyme catalyses Hydrolysis of (1-&gt;4)-beta-D-xylans, to remove successive D-xylose residues from the non-reducing termini.. It functions in the pathway glycan degradation; xylan degradation. Functionally, xylan 1,4-beta-xylosidase involved in the hydrolysis of xylan, a major structural heterogeneous polysaccharide found in plant biomass representing the second most abundant polysaccharide in the biosphere, after cellulose. In Aspergillus terreus (strain NIH 2624 / FGSC A1156), this protein is Probable exo-1,4-beta-xylosidase xlnD (xlnD).